The following is a 245-amino-acid chain: 4-hydroxy-tetrahydrodipicolinate reductase (245 aa).

Residues 8–13 (GSTGKM), 78–80 (GTT), and 102–105 (SANM) contribute to the NAD(+) site. Catalysis depends on His-134, which acts as the Proton donor/acceptor. His-135 provides a ligand contact to (S)-2,3,4,5-tetrahydrodipicolinate. The Proton donor role is filled by Lys-138. Residue 144 to 145 (GT) participates in (S)-2,3,4,5-tetrahydrodipicolinate binding.

This sequence belongs to the DapB family.

The protein localises to the cytoplasm. The catalysed reaction is (S)-2,3,4,5-tetrahydrodipicolinate + NAD(+) + H2O = (2S,4S)-4-hydroxy-2,3,4,5-tetrahydrodipicolinate + NADH + H(+). It carries out the reaction (S)-2,3,4,5-tetrahydrodipicolinate + NADP(+) + H2O = (2S,4S)-4-hydroxy-2,3,4,5-tetrahydrodipicolinate + NADPH + H(+). The protein operates within amino-acid biosynthesis; L-lysine biosynthesis via DAP pathway; (S)-tetrahydrodipicolinate from L-aspartate: step 4/4. In terms of biological role, catalyzes the conversion of 4-hydroxy-tetrahydrodipicolinate (HTPA) to tetrahydrodipicolinate. This is 4-hydroxy-tetrahydrodipicolinate reductase from Rickettsia akari (strain Hartford).